Consider the following 324-residue polypeptide: NADH-ubiquinone oxidoreductase chain 1 (324 aa).

9 helical membrane passes run 9 to 29 (ILNPLAFIVPVLLAVAFLTLL), 43 to 63 (PNIVGPYGLLQPIADGVKLFI), 75 to 95 (ILFILTPMLALTLAMTLWAPL), 106 to 126 (LAILLFVALSSLAVYSILGSG), 146 to 166 (ISYEVSLGLILLSLIIFTGGF), 177 to 197 (SIWLIIPAWPLAAMWYISTLA), 228 to 250 (LFFLAEYANILFMNTLSASLFLG), 259 to 279 (ELTTMNLMTKAAVLSLVFLWV), and 299 to 319 (FLPLTLALVIWHLALPITFAG).

The protein belongs to the complex I subunit 1 family.

It localises to the mitochondrion inner membrane. It carries out the reaction a ubiquinone + NADH + 5 H(+)(in) = a ubiquinol + NAD(+) + 4 H(+)(out). Its function is as follows. Core subunit of the mitochondrial membrane respiratory chain NADH dehydrogenase (Complex I) that is believed to belong to the minimal assembly required for catalysis. Complex I functions in the transfer of electrons from NADH to the respiratory chain. The immediate electron acceptor for the enzyme is believed to be ubiquinone. This chain is NADH-ubiquinone oxidoreductase chain 1 (MT-ND1), found in Tetraodon nigroviridis (Spotted green pufferfish).